Consider the following 753-residue polypeptide: 5-methyltetrahydropteroyltriglutamate--homocysteine methyltransferase (753 aa).

Residues 17-20 (RELK) and Lys-117 each bind 5-methyltetrahydropteroyltri-L-glutamate. Residues 431–433 (IGS) and Glu-484 each bind L-homocysteine. Residues 431-433 (IGS) and Glu-484 contribute to the L-methionine site. Residues 515–516 (RC) and Trp-561 contribute to the 5-methyltetrahydropteroyltri-L-glutamate site. Position 599 (Asp-599) interacts with L-homocysteine. Asp-599 is a binding site for L-methionine. Glu-605 serves as a coordination point for 5-methyltetrahydropteroyltri-L-glutamate. Residues His-641, Cys-643, and Glu-665 each coordinate Zn(2+). His-694 (proton donor) is an active-site residue. Cys-726 lines the Zn(2+) pocket.

Belongs to the vitamin-B12 independent methionine synthase family. Zn(2+) serves as cofactor.

It catalyses the reaction 5-methyltetrahydropteroyltri-L-glutamate + L-homocysteine = tetrahydropteroyltri-L-glutamate + L-methionine. The protein operates within amino-acid biosynthesis; L-methionine biosynthesis via de novo pathway; L-methionine from L-homocysteine (MetE route): step 1/1. Its function is as follows. Catalyzes the transfer of a methyl group from 5-methyltetrahydrofolate to homocysteine resulting in methionine formation. The sequence is that of 5-methyltetrahydropteroyltriglutamate--homocysteine methyltransferase from Escherichia coli (strain ATCC 8739 / DSM 1576 / NBRC 3972 / NCIMB 8545 / WDCM 00012 / Crooks).